A 545-amino-acid chain; its full sequence is Propane 2-monooxygenase, hydroxylase component large subunit (545 aa).

Residues E97, E127, H130, E192, E226, and H229 each coordinate Fe cation.

It belongs to the TmoA/XamoA family. The propane 2-monooxygenase multicomponent enzyme system is composed of an electron transfer component and a monooxygenase component interacting with the effector protein PrmD. The electron transfer component is composed of a reductase (PrmB), and the monooxygenase component is formed by a large subunit (PrmA) and a small subunit (PrmC). Probably requires the presence of the chaperonin-like protein PrmG to ensure a productive folding, resulting of a soluble PrmA, which leads to the active form of PrmABCD. Fe(2+) serves as cofactor.

The catalysed reaction is propane + NADH + O2 + H(+) = propan-2-ol + NAD(+) + H2O. It catalyses the reaction phenol + NADH + O2 + H(+) = hydroquinone + NAD(+) + H2O. In terms of biological role, component of the propane 2-monooxygenase multicomponent enzyme system which is involved in the degradation of propane via the O2-dependent hydroxylation of propane. Under acetone induction, also able to catalyze the oxidation of phenol to yield hydroquinone. In Gordonia sp. (strain TY-5), this protein is Propane 2-monooxygenase, hydroxylase component large subunit.